The following is a 407-amino-acid chain: Biflaviolin synthase CYP158A1 (407 aa).

Residues 1-11 (MTQETTTLTGQ) are compositionally biased toward polar residues. A disordered region spans residues 1 to 20 (MTQETTTLTGQSPPPVRDWP). Residues R92, Y199, and 290-291 (HR) contribute to the flaviolin site. C356 lines the heme pocket.

The protein belongs to the cytochrome P450 family. Heme serves as cofactor.

It carries out the reaction 2 flaviolin + 2 reduced [2Fe-2S]-[ferredoxin] + O2 + H(+) = 3,3'-biflaviolin + 2 oxidized [2Fe-2S]-[ferredoxin] + 2 H2O. The enzyme catalyses 2 flaviolin + 2 reduced [2Fe-2S]-[ferredoxin] + O2 + H(+) = 3,8'-biflaviolin + 2 oxidized [2Fe-2S]-[ferredoxin] + 2 H2O. Its pathway is pigment biosynthesis. Catalyzes oxidative C-C coupling reaction to polymerize flaviolin and form highly conjugated pigments which protect the soil bacterium from deleterious effects of UV irradiation (two isomers of biflaviolin and one triflaviolin). This chain is Biflaviolin synthase CYP158A1, found in Streptomyces coelicolor (strain ATCC BAA-471 / A3(2) / M145).